Consider the following 249-residue polypeptide: Small ribosomal subunit protein uS2 (249 aa).

It belongs to the universal ribosomal protein uS2 family.

This is Small ribosomal subunit protein uS2 from Listeria monocytogenes serovar 1/2a (strain ATCC BAA-679 / EGD-e).